Consider the following 415-residue polypeptide: Tyrosine--tRNA ligase (415 aa).

Y33 provides a ligand contact to L-tyrosine. The 'HIGH' region motif lies at 38-47 (PSGESLHLGN). L-tyrosine is bound by residues Y161 and Q165. The short motif at 225 to 229 (KFGKS) is the 'KMSKS' region element. Residue K228 coordinates ATP. An S4 RNA-binding domain is found at 350–414 (MVIDFLLQAK…KKNYFIVVWK (65 aa)).

Belongs to the class-I aminoacyl-tRNA synthetase family. TyrS type 1 subfamily. As to quaternary structure, homodimer.

It localises to the cytoplasm. The catalysed reaction is tRNA(Tyr) + L-tyrosine + ATP = L-tyrosyl-tRNA(Tyr) + AMP + diphosphate + H(+). Catalyzes the attachment of tyrosine to tRNA(Tyr) in a two-step reaction: tyrosine is first activated by ATP to form Tyr-AMP and then transferred to the acceptor end of tRNA(Tyr). In Mycoplasmoides gallisepticum (strain R(low / passage 15 / clone 2)) (Mycoplasma gallisepticum), this protein is Tyrosine--tRNA ligase.